The following is a 138-amino-acid chain: Vesicle transport protein GOT1B (138 aa).

An N-acetylmethionine modification is found at M1. The Cytoplasmic portion of the chain corresponds to 1 to 9; the sequence is MISLTDTQK. The helical transmembrane segment at 10 to 30 threads the bilayer; sequence IGMGLTGFGVFFLFFGMILFF. Residues 31–32 are Lumenal-facing; it reads DK. The chain crosses the membrane as a helical span at residues 33–53; sequence ALLAIGNVLFVAGLAFVIGLE. Residues 54 to 68 lie on the Cytoplasmic side of the membrane; sequence RTFRFFFQRHKVKAT. Position 90 (E90) is a topological domain, lumenal. Residues 91 to 109 form a helical membrane-spanning segment; it reads IYGFFLLFRGFFPVVVGFI. Residues 110–138 are Cytoplasmic-facing; the sequence is RRVPVLGSLLNLPGIRSFVDKVGESNNMV.

This sequence belongs to the GOT1 family.

The protein localises to the golgi apparatus membrane. Its function is as follows. May be involved in fusion of ER-derived transport vesicles with the Golgi complex. This chain is Vesicle transport protein GOT1B (Golt1b), found in Mus musculus (Mouse).